The following is a 430-amino-acid chain: Glutamate-1-semialdehyde 2,1-aminomutase (430 aa).

Lys267 carries the post-translational modification N6-(pyridoxal phosphate)lysine.

The protein belongs to the class-III pyridoxal-phosphate-dependent aminotransferase family. HemL subfamily. As to quaternary structure, homodimer. Pyridoxal 5'-phosphate is required as a cofactor.

The protein localises to the cytoplasm. It carries out the reaction (S)-4-amino-5-oxopentanoate = 5-aminolevulinate. It functions in the pathway porphyrin-containing compound metabolism; protoporphyrin-IX biosynthesis; 5-aminolevulinate from L-glutamyl-tRNA(Glu): step 2/2. The chain is Glutamate-1-semialdehyde 2,1-aminomutase from Cytophaga hutchinsonii (strain ATCC 33406 / DSM 1761 / CIP 103989 / NBRC 15051 / NCIMB 9469 / D465).